A 210-amino-acid chain; its full sequence is Na(+)-translocating NADH-quinone reductase subunit D (210 aa).

6 helical membrane-spanning segments follow: residues 9–29, 42–62, 72–92, 103–123, 131–151, and 178–198; these read SVLIGPIVSNNPIALQILGVC, LVMTIALTAVCALSNLFISLI, IIVQMTIIASLVIVVDQVLQA, VFVGLIITNCIVMGRAEAFAM, FMDGLGNGLGYGAILLSVGFV, and NGLLLLPPSAFFLIGALIWII.

It belongs to the NqrDE/RnfAE family. In terms of assembly, composed of six subunits; NqrA, NqrB, NqrC, NqrD, NqrE and NqrF.

The protein localises to the cell inner membrane. The catalysed reaction is a ubiquinone + n Na(+)(in) + NADH + H(+) = a ubiquinol + n Na(+)(out) + NAD(+). Functionally, NQR complex catalyzes the reduction of ubiquinone-1 to ubiquinol by two successive reactions, coupled with the transport of Na(+) ions from the cytoplasm to the periplasm. NqrA to NqrE are probably involved in the second step, the conversion of ubisemiquinone to ubiquinol. The chain is Na(+)-translocating NADH-quinone reductase subunit D from Shewanella piezotolerans (strain WP3 / JCM 13877).